Here is a 284-residue protein sequence, read N- to C-terminus: Elongation factor Ts (284 aa).

An involved in Mg(2+) ion dislocation from EF-Tu region spans residues 80-83 (TDFV).

This sequence belongs to the EF-Ts family.

It is found in the cytoplasm. In terms of biological role, associates with the EF-Tu.GDP complex and induces the exchange of GDP to GTP. It remains bound to the aminoacyl-tRNA.EF-Tu.GTP complex up to the GTP hydrolysis stage on the ribosome. The sequence is that of Elongation factor Ts from Neisseria gonorrhoeae (strain ATCC 700825 / FA 1090).